A 355-amino-acid chain; its full sequence is Nuclear speckle splicing regulatory protein 1 homolog (355 aa).

Residues 1–57 form a disordered region; it reads MSGTGFRYGLNVMKKKKPNESSNRITFTEDDSSSSEQEHAPIPNSFSSQITAASDAS. Residues 44–54 show a composition bias toward polar residues; sequence NSFSSQITAAS. Residues 99 to 162 are a coiled coil; it reads MENLIESAKK…EDRKEEDEKS (64 aa). 2 disordered regions span residues 253 to 292 and 325 to 355; these read SANN…HGTY and KIHA…ATNP. The span at 280 to 289 shows a compositional bias: basic and acidic residues; sequence YHQDRPDKRH. Positions 293–326 form a coiled coil; the sequence is SLEEIDKQRKEFENRQRLQKEKEFQKSREAALKI. Positions 329 to 339 are enriched in polar residues; the sequence is SRNTTETQVQS. Over residues 346-355 the composition is skewed to basic residues; it reads QRKKKAATNP.

This sequence belongs to the NSRP1 family.

The protein is Nuclear speckle splicing regulatory protein 1 homolog of Schizosaccharomyces pombe (strain 972 / ATCC 24843) (Fission yeast).